The chain runs to 422 residues: Keratin, type I cytoskeletal 23 (422 aa).

A compositionally biased stretch (polar residues) spans 1-13 (MNSGHSFSQTPSA). Positions 1-71 (MNSGHSFSQT…GRSSPLLGGN (71 aa)) are head. A disordered region spans residues 1 to 73 (MNSGHSFSQT…SSPLLGGNGK (73 aa)). Residues 72–107 (GKATMQNLNDRLASYLEKVRALEEANMKLESRILKW) are coil 1A. The IF rod domain occupies 72-382 (GKATMQNLND…RLLEGESEGT (311 aa)). The tract at residues 108-125 (HQQRDPGSKKDYSQYEEN) is linker 1. The tract at residues 126–217 (ITHLQEQIVD…KHHEQEMEKH (92 aa)) is coil 1B. The segment at 218 to 240 (HVPSDFNVNVKVDTGPREDLIKV) is linker 12. Positions 241–378 (LEDMRQEYEL…TTYRRLLEGE (138 aa)) are coil 2. The tract at residues 379–422 (SEGTREESKSSMKVSATPKIKAITQETINGRLVLCQVNEIQKHA) is rod-like helical tail.

This sequence belongs to the intermediate filament family. As to quaternary structure, heterotetramer of two type I and two type II keratins.

This is Keratin, type I cytoskeletal 23 (KRT23) from Homo sapiens (Human).